The sequence spans 393 residues: Tryptophan 2,3-dioxygenase (393 aa).

Substrate-binding positions include 56-60 and R127; that span reads FIVTH. H312 contributes to the heme binding site. Residue T327 participates in substrate binding.

Belongs to the tryptophan 2,3-dioxygenase family. Homotetramer. Dimer of dimers. Heme is required as a cofactor.

It carries out the reaction L-tryptophan + O2 = N-formyl-L-kynurenine. It functions in the pathway amino-acid degradation; L-tryptophan degradation via kynurenine pathway; L-kynurenine from L-tryptophan: step 1/2. Its pathway is pigment biosynthesis; ommochrome biosynthesis. With respect to regulation, stimulated by low concentrations of hydrogen peroxide (5 uM), ascorbate (0.1-0.3 mM), and sodium hydrosulfite (0.1 mM). Inhibited by high concentrations of hydrogen peroxide (0.1 mM), ascorbate (10 mM), and sodium hydrosulfite (1 mM). Heme-dependent dioxygenase that catalyzes the oxidative cleavage of the L-tryptophan (L-Trp) pyrrole ring and converts L-tryptophan to N-formyl-L-kynurenine. Catalyzes the oxidative cleavage of the indole moiety. This chain is Tryptophan 2,3-dioxygenase, found in Aedes aegypti (Yellowfever mosquito).